The sequence spans 393 residues: ATP phosphoribosyltransferase regulatory subunit (393 aa).

This sequence belongs to the class-II aminoacyl-tRNA synthetase family. HisZ subfamily. In terms of assembly, heteromultimer composed of HisG and HisZ subunits.

It localises to the cytoplasm. Its pathway is amino-acid biosynthesis; L-histidine biosynthesis; L-histidine from 5-phospho-alpha-D-ribose 1-diphosphate: step 1/9. Required for the first step of histidine biosynthesis. May allow the feedback regulation of ATP phosphoribosyltransferase activity by histidine. The polypeptide is ATP phosphoribosyltransferase regulatory subunit (Shouchella clausii (strain KSM-K16) (Alkalihalobacillus clausii)).